Reading from the N-terminus, the 474-residue chain is Citrate synthase 4, mitochondrial (474 aa).

The N-terminal 16 residues, 1 to 16, are a transit peptide targeting the mitochondrion; it reads MVFFRSVSAFTRLRSR. Active-site residues include histidine 308, histidine 354, and aspartate 409.

Belongs to the citrate synthase family. In terms of assembly, homodimer.

Its subcellular location is the mitochondrion matrix. It carries out the reaction oxaloacetate + acetyl-CoA + H2O = citrate + CoA + H(+). It participates in carbohydrate metabolism; tricarboxylic acid cycle; isocitrate from oxaloacetate: step 1/2. This Arabidopsis thaliana (Mouse-ear cress) protein is Citrate synthase 4, mitochondrial (CSY4).